Consider the following 223-residue polypeptide: Cutinase (223 aa).

The N-terminal stretch at 1–19 (MKFFAFSMLIGEASPIVLA) is a signal peptide. Cys46 and Cys124 are joined by a disulfide. Residue Ser135 is the Nucleophile of the active site. A disulfide bridge connects residues Cys185 and Cys192. Residue Asp189 is part of the active site. His202 functions as the Proton donor/acceptor in the catalytic mechanism.

This sequence belongs to the cutinase family. Post-translationally, the 2 disulfide bonds play a critical role in holding the catalytic residues in juxta-position; reduction of the disulfide bridges results in the complete inactivation of the enzyme.

It localises to the secreted. The enzyme catalyses cutin + H2O = cutin monomers.. In terms of biological role, catalyzes the hydrolysis of complex carboxylic polyesters found in the cell wall of plants. Degrades cutin, a macromolecule that forms the structure of the plant cuticle. Allows pathogenic fungi to penetrate through the cuticular barrier into the host plant during the initial stage of fungal infection. The protein is Cutinase (CUT) of Didymella rabiei (Chickpea ascochyta blight fungus).